The following is a 254-amino-acid chain: 3-deoxy-manno-octulosonate cytidylyltransferase (254 aa).

This sequence belongs to the KdsB family.

The protein localises to the cytoplasm. It catalyses the reaction 3-deoxy-alpha-D-manno-oct-2-ulosonate + CTP = CMP-3-deoxy-beta-D-manno-octulosonate + diphosphate. It functions in the pathway nucleotide-sugar biosynthesis; CMP-3-deoxy-D-manno-octulosonate biosynthesis; CMP-3-deoxy-D-manno-octulosonate from 3-deoxy-D-manno-octulosonate and CTP: step 1/1. It participates in bacterial outer membrane biogenesis; lipopolysaccharide biosynthesis. In terms of biological role, activates KDO (a required 8-carbon sugar) for incorporation into bacterial lipopolysaccharide in Gram-negative bacteria. This chain is 3-deoxy-manno-octulosonate cytidylyltransferase, found in Pseudomonas syringae pv. tomato (strain ATCC BAA-871 / DC3000).